The sequence spans 598 residues: Elongation factor 4 (598 aa).

The tr-type G domain maps to 5 to 187 (SHIRNFSIIA…RLVATIPAPI (183 aa)). Residues 17–22 (DHGKST) and 134–137 (NKID) contribute to the GTP site.

It belongs to the TRAFAC class translation factor GTPase superfamily. Classic translation factor GTPase family. LepA subfamily.

The protein resides in the cell inner membrane. It carries out the reaction GTP + H2O = GDP + phosphate + H(+). Functionally, required for accurate and efficient protein synthesis under certain stress conditions. May act as a fidelity factor of the translation reaction, by catalyzing a one-codon backward translocation of tRNAs on improperly translocated ribosomes. Back-translocation proceeds from a post-translocation (POST) complex to a pre-translocation (PRE) complex, thus giving elongation factor G a second chance to translocate the tRNAs correctly. Binds to ribosomes in a GTP-dependent manner. The sequence is that of Elongation factor 4 from Pseudomonas fluorescens (strain Pf0-1).